The primary structure comprises 264 residues: Thymidylate synthase (264 aa).

A dUMP-binding site is contributed by R21. Residue H51 participates in (6R)-5,10-methylene-5,6,7,8-tetrahydrofolate binding. 126–127 (RR) provides a ligand contact to dUMP. The active-site Nucleophile is C146. DUMP contacts are provided by residues 166 to 169 (RSGD), N177, and 207 to 209 (HLY). D169 serves as a coordination point for (6R)-5,10-methylene-5,6,7,8-tetrahydrofolate. Residue A263 participates in (6R)-5,10-methylene-5,6,7,8-tetrahydrofolate binding.

It belongs to the thymidylate synthase family. Bacterial-type ThyA subfamily. In terms of assembly, homodimer.

The protein localises to the cytoplasm. The catalysed reaction is dUMP + (6R)-5,10-methylene-5,6,7,8-tetrahydrofolate = 7,8-dihydrofolate + dTMP. It participates in pyrimidine metabolism; dTTP biosynthesis. Catalyzes the reductive methylation of 2'-deoxyuridine-5'-monophosphate (dUMP) to 2'-deoxythymidine-5'-monophosphate (dTMP) while utilizing 5,10-methylenetetrahydrofolate (mTHF) as the methyl donor and reductant in the reaction, yielding dihydrofolate (DHF) as a by-product. This enzymatic reaction provides an intracellular de novo source of dTMP, an essential precursor for DNA biosynthesis. The sequence is that of Thymidylate synthase from Xanthomonas campestris pv. campestris (strain 8004).